A 79-amino-acid polypeptide reads, in one-letter code: Acyl carrier protein (79 aa).

Residues 2–77 (ESIEQRVKKI…QAIDYINSHG (76 aa)) form the Carrier domain. Serine 37 carries the O-(pantetheine 4'-phosphoryl)serine modification.

Belongs to the acyl carrier protein (ACP) family. In terms of processing, 4'-phosphopantetheine is transferred from CoA to a specific serine of apo-ACP by AcpS. This modification is essential for activity because fatty acids are bound in thioester linkage to the sulfhydryl of the prosthetic group.

It is found in the cytoplasm. Its pathway is lipid metabolism; fatty acid biosynthesis. Functionally, carrier of the growing fatty acid chain in fatty acid biosynthesis. In Bordetella avium (strain 197N), this protein is Acyl carrier protein.